Consider the following 411-residue polypeptide: ATP phosphoribosyltransferase 1, chloroplastic (411 aa).

The segment covering 1-12 (MSLLLPTNLQQY) has biased composition (polar residues). A disordered region spans residues 1-27 (MSLLLPTNLQQYPSSSSFPSSTPILSP). Residues 1–49 (MSLLLPTNLQQYPSSSSFPSSTPILSPPPSTAFSVIVPRRRCLRLVTSC) constitute a chloroplast transit peptide. The segment covering 13–24 (PSSSSFPSSTPI) has biased composition (low complexity). The residue at position 50 (Val-50) is an N-acetylvaline.

The protein belongs to the ATP phosphoribosyltransferase family. Long subfamily. It depends on Mg(2+) as a cofactor. Expressed in leaves and at lower levels in roots (at protein level).

Its subcellular location is the plastid. The protein localises to the chloroplast. The catalysed reaction is 1-(5-phospho-beta-D-ribosyl)-ATP + diphosphate = 5-phospho-alpha-D-ribose 1-diphosphate + ATP. It functions in the pathway amino-acid biosynthesis; L-histidine biosynthesis; L-histidine from 5-phospho-alpha-D-ribose 1-diphosphate: step 1/9. Its activity is regulated as follows. Feedback inhibited by L-histidine. In terms of biological role, catalyzes the condensation of ATP and 5-phosphoribose 1-diphosphate to form N'-(5'-phosphoribosyl)-ATP (PR-ATP). This Arabidopsis thaliana (Mouse-ear cress) protein is ATP phosphoribosyltransferase 1, chloroplastic (HISN1A).